The primary structure comprises 196 residues: Pyridoxal 5'-phosphate synthase subunit PdxT (196 aa).

47-49 contributes to the L-glutamine binding site; the sequence is GES. C79 functions as the Nucleophile in the catalytic mechanism. Residues R106 and 134 to 135 contribute to the L-glutamine site; that span reads IR. Active-site charge relay system residues include H170 and E172.

The protein belongs to the glutaminase PdxT/SNO family. As to quaternary structure, in the presence of PdxS, forms a dodecamer of heterodimers. Only shows activity in the heterodimer.

It carries out the reaction aldehydo-D-ribose 5-phosphate + D-glyceraldehyde 3-phosphate + L-glutamine = pyridoxal 5'-phosphate + L-glutamate + phosphate + 3 H2O + H(+). The enzyme catalyses L-glutamine + H2O = L-glutamate + NH4(+). Its pathway is cofactor biosynthesis; pyridoxal 5'-phosphate biosynthesis. In terms of biological role, catalyzes the hydrolysis of glutamine to glutamate and ammonia as part of the biosynthesis of pyridoxal 5'-phosphate. The resulting ammonia molecule is channeled to the active site of PdxS. This is Pyridoxal 5'-phosphate synthase subunit PdxT from Bacillus licheniformis (strain ATCC 14580 / DSM 13 / JCM 2505 / CCUG 7422 / NBRC 12200 / NCIMB 9375 / NCTC 10341 / NRRL NRS-1264 / Gibson 46).